Reading from the N-terminus, the 300-residue chain is Cation-efflux pump FieF (300 aa).

4 consecutive transmembrane segments (helical) span residues 12-32, 39-59, 82-102, and 114-134; these read AAIA…FAWW, ILAA…NLLV, AALA…LTGI, and PGVG…LVSF. Zn(2+) contacts are provided by Asp-45 and Asp-49. Positions 153 and 157 each coordinate Zn(2+). The next 2 helical transmembrane spans lie at 156-176 and 178-198; these read SDVM…YGWH and ADAL…LRMG.

This sequence belongs to the cation diffusion facilitator (CDF) transporter (TC 2.A.4) family. FieF subfamily. Homodimer.

The protein localises to the cell inner membrane. The enzyme catalyses Zn(2+)(in) + H(+)(out) = Zn(2+)(out) + H(+)(in). It carries out the reaction Cd(2+)(in) + H(+)(out) = Cd(2+)(out) + H(+)(in). The catalysed reaction is Fe(2+)(in) + H(+)(out) = Fe(2+)(out) + H(+)(in). In terms of biological role, divalent metal cation transporter which exports Zn(2+), Cd(2+) and possibly Fe(2+). May be involved in zinc and iron detoxification by efflux. This Escherichia coli O127:H6 (strain E2348/69 / EPEC) protein is Cation-efflux pump FieF.